Here is a 161-residue protein sequence, read N- to C-terminus: 3-hydroxyacyl-[acyl-carrier-protein] dehydratase FabZ (161 aa).

Histidine 66 is a catalytic residue.

It belongs to the thioester dehydratase family. FabZ subfamily.

It localises to the cytoplasm. The enzyme catalyses a (3R)-hydroxyacyl-[ACP] = a (2E)-enoyl-[ACP] + H2O. Involved in unsaturated fatty acids biosynthesis. Catalyzes the dehydration of short chain beta-hydroxyacyl-ACPs and long chain saturated and unsaturated beta-hydroxyacyl-ACPs. This chain is 3-hydroxyacyl-[acyl-carrier-protein] dehydratase FabZ, found in Gluconacetobacter diazotrophicus (strain ATCC 49037 / DSM 5601 / CCUG 37298 / CIP 103539 / LMG 7603 / PAl5).